We begin with the raw amino-acid sequence, 193 residues long: Protein SINE3 (193 aa).

Residues 15–35 form a disordered region; sequence SELGAKRLKDPEMKNRKVTTE. A compositionally biased stretch (basic and acidic residues) spans 18-35; that stretch reads GAKRLKDPEMKNRKVTTE. In terms of domain architecture, KASH spans 155 to 193; it reads VTVKFRIVLLSFILWAILAAIVVFFSSGEERAYRGPLPT. The helical transmembrane segment at 161-181 threads the bilayer; it reads IVLLSFILWAILAAIVVFFSS. The short motif at 190 to 193 is the Required for nuclear localization element; it reads PLPT.

As to quaternary structure, interacts with SUN1 and SUN2.

The protein localises to the nucleus membrane. This is Protein SINE3 from Arabidopsis thaliana (Mouse-ear cress).